A 195-amino-acid chain; its full sequence is NADH-ubiquinone oxidoreductase subunit 9 (195 aa).

It belongs to the complex I 30 kDa subunit family. In terms of assembly, complex I is composed of about 30 different subunits.

The protein localises to the mitochondrion inner membrane. It catalyses the reaction a ubiquinone + NADH + 5 H(+)(in) = a ubiquinol + NAD(+) + 4 H(+)(out). Functionally, core subunit of the mitochondrial membrane respiratory chain NADH dehydrogenase (Complex I) that is believed to belong to the minimal assembly required for catalysis. Complex I functions in the transfer of electrons from NADH to the respiratory chain. The immediate electron acceptor for the enzyme is believed to be ubiquinone. This chain is NADH-ubiquinone oxidoreductase subunit 9 (NAD9), found in Acanthamoeba castellanii (Amoeba).